The sequence spans 329 residues: Ferredoxin--NADP reductase 2 (329 aa).

The FAD site is built by Thr18, Glu37, Gln45, Tyr50, Val90, Phe124, Asp285, and Ser326.

Belongs to the ferredoxin--NADP reductase type 2 family. As to quaternary structure, homodimer. Requires FAD as cofactor.

The catalysed reaction is 2 reduced [2Fe-2S]-[ferredoxin] + NADP(+) + H(+) = 2 oxidized [2Fe-2S]-[ferredoxin] + NADPH. The chain is Ferredoxin--NADP reductase 2 from Bacillus cytotoxicus (strain DSM 22905 / CIP 110041 / 391-98 / NVH 391-98).